The following is a 164-amino-acid chain: Thiol peroxidase (164 aa).

The 146-residue stretch at 18 to 163 folds into the Thioredoxin domain; the sequence is VNEGDIAPNF…FEAALKAYRN (146 aa). C60 serves as the catalytic Cysteine sulfenic acid (-SOH) intermediate. C60 and C93 are disulfide-bonded.

This sequence belongs to the peroxiredoxin family. Tpx subfamily. Homodimer.

It catalyses the reaction a hydroperoxide + [thioredoxin]-dithiol = an alcohol + [thioredoxin]-disulfide + H2O. Its function is as follows. Thiol-specific peroxidase that catalyzes the reduction of hydrogen peroxide and organic hydroperoxides to water and alcohols, respectively. Plays a role in cell protection against oxidative stress by detoxifying peroxides. This Staphylococcus epidermidis (strain ATCC 35984 / DSM 28319 / BCRC 17069 / CCUG 31568 / BM 3577 / RP62A) protein is Thiol peroxidase.